Reading from the N-terminus, the 286-residue chain is 2,3,4,5-tetrahydropyridine-2,6-dicarboxylate N-succinyltransferase (286 aa).

Substrate is bound by residues R111 and D148.

Belongs to the transferase hexapeptide repeat family. In terms of assembly, homotrimer.

Its subcellular location is the cytoplasm. The enzyme catalyses (S)-2,3,4,5-tetrahydrodipicolinate + succinyl-CoA + H2O = (S)-2-succinylamino-6-oxoheptanedioate + CoA. The protein operates within amino-acid biosynthesis; L-lysine biosynthesis via DAP pathway; LL-2,6-diaminopimelate from (S)-tetrahydrodipicolinate (succinylase route): step 1/3. The sequence is that of 2,3,4,5-tetrahydropyridine-2,6-dicarboxylate N-succinyltransferase from Rhizobium etli (strain ATCC 51251 / DSM 11541 / JCM 21823 / NBRC 15573 / CFN 42).